The following is a 68-amino-acid chain: Riparin-1.6 (68 aa).

Positions Met1–Ala15 are cleaved as a signal peptide. Positions Gln16–Arg41 are excised as a propeptide. Cysteines 47 and 53 form a disulfide. Cys53 is modified (cysteine amide). Residues Asp57 to Glu68 constitute a propeptide that is removed on maturation.

As to expression, expressed by the skin glands.

The protein resides in the secreted. The protein is Riparin-1.6 of Crinia riparia (Streambank froglet).